A 777-amino-acid chain; its full sequence is Aminopeptidase P (777 aa).

An N-terminal signal peptide occupies residues 1–17 (MQLNFLLFVFIFLMVFH). His551 lines the substrate pocket. Mn(2+)-binding residues include Asp570 and Asp581. Residue His640 participates in substrate binding. Residue His644 coordinates Mn(2+). Residue His653 coordinates substrate. Mn(2+) is bound by residues Glu676 and Glu690.

It belongs to the peptidase M24B family. Homodimer. It depends on Mn(2+) as a cofactor. The N-terminus may be proteolytically cleaved to generate a 73-kDa mature form.

The protein resides in the vacuole lumen. It is found in the cytoplasm. The catalysed reaction is Release of any N-terminal amino acid, including proline, that is linked to proline, even from a dipeptide or tripeptide.. Its activity is regulated as follows. Partially activated by Co(2+) and Mg(2+) has no effect. Inhibited by 1 mM Zn(2+), Ni(2+), or Cu(2+). Inhibited by apstatin, a non-hydrolysable peptide analog. In terms of biological role, catalyzes the removal of a penultimate prolyl residue from the N-termini of peptides. In the food vacuole, involved in the final step of host hemoglobin catabolism, by cleaving hemoglobin-derived oligopeptides. In the cytoplasm, may be involved in the last steps of the turnover of ubiquitinated proteins. This Plasmodium falciparum (isolate 3D7) protein is Aminopeptidase P.